Here is a 433-residue protein sequence, read N- to C-terminus: 23S rRNA (uracil(1939)-C(5))-methyltransferase RlmD (433 aa).

The 59-residue stretch at 10–68 (RTTTRQIITVSVNDLDSFGQGVARHNGKTLFIPGLLSQENAEVTVTEDKKQYARAKVVR) folds into the TRAM domain. 4 residues coordinate [4Fe-4S] cluster: C81, C87, C90, and C162. Residues Q265, F294, N299, E315, N342, and D363 each contribute to the S-adenosyl-L-methionine site. C389 functions as the Nucleophile in the catalytic mechanism.

It belongs to the class I-like SAM-binding methyltransferase superfamily. RNA M5U methyltransferase family. RlmD subfamily.

The catalysed reaction is uridine(1939) in 23S rRNA + S-adenosyl-L-methionine = 5-methyluridine(1939) in 23S rRNA + S-adenosyl-L-homocysteine + H(+). Functionally, catalyzes the formation of 5-methyl-uridine at position 1939 (m5U1939) in 23S rRNA. This is 23S rRNA (uracil(1939)-C(5))-methyltransferase RlmD from Shigella dysenteriae serotype 1 (strain Sd197).